Consider the following 743-residue polypeptide: Tegument protein UL46 homolog (743 aa).

3 disordered regions span residues G437–A481, H522–M590, and R693–L743. Residues D526–T552 are compositionally biased toward low complexity. 2 stretches are compositionally biased toward polar residues: residues Q573–N586 and G697–S716. A compositionally biased stretch (low complexity) spans R722–L743.

It belongs to the herpesviridae HHV-1 VP11/12 protein family. As to quaternary structure, interacts with VP16.

The protein resides in the virion tegument. The protein localises to the host cell membrane. In terms of biological role, abundant tegument protein. Trans-activates the immediate early genes. The chain is Tegument protein UL46 homolog from Equus caballus (Horse).